We begin with the raw amino-acid sequence, 507 residues long: MMLGGGGGCGAGGTWLGFLVFLAVSLRNHSTCEDIDAEDRLMVDLFRGYNSLVQPVRNRSELPMIVKIGMQLVLLINVDEKEQVMHTNVWLTMKWDDFQLKWDPRDYANITQIRVAPEKVWLPDIVLFNNADGNYEVSFMCNVLILSTGTVLWVPPAIYKSSCIIDVEFFPFDDQLCSLTFGSWTYNRDEIKLDFLTSDRVDFSEYSTSSIWDMMDGPAVLTSDRSRIEFQIRIRRKTLFYTVVLILPTVLMAFLNVTVFYLPTASGEKMGLTMNVLLSIVVFLLLVSKILPPTSSSIPLVAKYLLLTFVLNIITIMVTTIICNIYFRSPITHRLPPWVRKVFLDILPLLMCMQRPHRKNVIQRSHRRLLETGPSVEENPMRSGEHHPLCRHTHNQDSCRRVRIQSDELDDELSPEAQRAIDAIEFITENRRDEEITKQFRDDWKFIASVVDRFLLYGFFGATVGGTIGIIFTAPSVFETFDENATLVKLKQLYDMGLANDTVLGIF.

The first 31 residues, 1-31 (MMLGGGGGCGAGGTWLGFLVFLAVSLRNHST), serve as a signal peptide directing secretion. N-linked (GlcNAc...) asparagine glycans are attached at residues asparagine 28, asparagine 58, and asparagine 109. At 32–138 (CEDIDAEDRL…NNADGNYEVS (107 aa)) the chain is on the extracellular side. The helical transmembrane segment at 139–159 (FMCNVLILSTGTVLWVPPAIY) threads the bilayer. Cysteine 163 and cysteine 177 are oxidised to a cystine. The next 3 helical transmembrane spans lie at 243-263 (VVLILPTVLMAFLNVTVFYLP), 271-291 (GLTMNVLLSIVVFLLLVSKIL), and 305-325 (LLLTFVLNIITIMVTTIICNI). The segment at 373–392 (GPSVEENPMRSGEHHPLCRH) is disordered. Residues 379–392 (NPMRSGEHHPLCRH) are compositionally biased toward basic and acidic residues. A helical membrane pass occupies residues 454-474 (FLLYGFFGATVGGTIGIIFTA).

It belongs to the ligand-gated ion channel (TC 1.A.9) family. Acetylcholine receptor (TC 1.A.9.1) subfamily. In terms of assembly, interacts with unc-29. Component of nicotinic acetylcholine receptor composed of 2 non-alpha subunits lev-1 and unc-29, and 3 alpha subunits unc-38, unc-63 and lev-8.

The protein localises to the postsynaptic cell membrane. It localises to the cell membrane. In terms of biological role, non-alpha subunit of nicotinic acetylcholine receptor (nAChR). Involved in nAChR sensitivity to nicotine. The sequence is that of Acetylcholine receptor subunit beta-type lev-1 (lev-1) from Caenorhabditis elegans.